A 197-amino-acid chain; its full sequence is Probable GTP-binding protein EngB (197 aa).

An EngB-type G domain is found at 22–195 (GFPEIGLAGR…WQWIEAHTVG (174 aa)). Residues 30–37 (GRSNVGKS), 57–61 (GKTQT), 75–78 (DVPG), 142–145 (TKSD), and 174–176 (FSA) contribute to the GTP site. 2 residues coordinate Mg(2+): serine 37 and threonine 59.

This sequence belongs to the TRAFAC class TrmE-Era-EngA-EngB-Septin-like GTPase superfamily. EngB GTPase family. Requires Mg(2+) as cofactor.

In terms of biological role, necessary for normal cell division and for the maintenance of normal septation. This is Probable GTP-binding protein EngB from Lactiplantibacillus plantarum (strain ATCC BAA-793 / NCIMB 8826 / WCFS1) (Lactobacillus plantarum).